The sequence spans 30 residues: LIM and SH3 domain protein 1 (30 aa).

M1 bears the N-acetylmethionine mark. Positions 5-30 constitute an LIM zinc-binding domain; that stretch reads CARCGKIVYPTEKVNCLDKFWHKACF.

As to quaternary structure, interacts with F-actin. Interacts with ANKRD54. Interacts with KBTBD10. Post-translationally, phosphorylated.

Its subcellular location is the cytoplasm. It is found in the cell cortex. The protein localises to the cytoskeleton. In terms of biological role, plays an important role in the regulation of dynamic actin-based, cytoskeletal activities. Agonist-dependent changes in LASP1 phosphorylation may also serve to regulate actin-associated ion transport activities, not only in the parietal cell but also in certain other F-actin-rich secretory epithelial cell types. The sequence is that of LIM and SH3 domain protein 1 (LASP1) from Sus scrofa (Pig).